Consider the following 276-residue polypeptide: MPAASTAATTLLQASQSEVLGEIQSNFLLNSSLWVNIALAGVVILLFVAMGRELESSRAKLIWVATMLVPLVSISSYAGLASGLTVGFLQMPPGHALAGQEVLSPWGRYLTWTFSTPMILLALGLLADTDMASLFTAITMDIGMCITGLAAALVTSSHLLRWVFYGISCAFFIAVLYVLLVEWPADAEAAGTSEIFGTLKLLTVVLWLGYPILWALGSEGVALLSVGVTSWGYSGLDILAKYVFAFLLLRWVAANEDTVTQAGMSLGSGGAAPADD.

Positions 1–21 (MPAASTAATTLLQASQSEVLG) are excised as a propeptide. Residues 22–25 (EIQS) lie on the Extracellular side of the membrane. A helical membrane pass occupies residues 26 to 51 (NFLLNSSLWVNIALAGVVILLFVAMG). Residues 52–57 (RELESS) lie on the Cytoplasmic side of the membrane. A helical transmembrane segment spans residues 58–81 (RAKLIWVATMLVPLVSISSYAGLA). The Extracellular portion of the chain corresponds to 82 to 105 (SGLTVGFLQMPPGHALAGQEVLSP). Residues 106 to 127 (WGRYLTWTFSTPMILLALGLLA) form a helical membrane-spanning segment. Residues 128–130 (DTD) are Cytoplasmic-facing. A helical membrane pass occupies residues 131 to 154 (MASLFTAITMDIGMCITGLAAALV). Topologically, residues 155–157 (TSS) are extracellular. A helical transmembrane segment spans residues 158-180 (HLLRWVFYGISCAFFIAVLYVLL). Residues 181–192 (VEWPADAEAAGT) lie on the Cytoplasmic side of the membrane. Residues 193-216 (SEIFGTLKLLTVVLWLGYPILWAL) traverse the membrane as a helical segment. At 217-225 (GSEGVALLS) the chain is on the extracellular side. A helical transmembrane segment spans residues 226–254 (VGVTSWGYSGLDILAKYVFAFLLLRWVAA). K241 is subject to N6-(retinylidene)lysine. Residues 255 to 276 (NEDTVTQAGMSLGSGGAAPADD) are Cytoplasmic-facing.

Belongs to the archaeal/bacterial/fungal opsin family.

It is found in the cell membrane. In terms of biological role, light-driven chloride pump. This chain is Cruxhalorhodopsin-3 (choP3), found in Haloarcula vallismortis (Halobacterium vallismortis).